A 362-amino-acid chain; its full sequence is MERIVVTLGERSYPITIASGLFNEPASFLPLKSGEQVMLVTNETLAPLYLDKVRGVLEQAGVNVDSVILPDGEQYKSLAVLDTVFTALLQKPHGRDTTLVALGGGVVGDLTGFAAASYQRGVRFIQVPTTLLSQVDSSVGGKTAVNHPLGKNMIGAFYQPASVVVDLDCLKTLPPRELASGLAEVIKYGIILDGAFFNWLEEHLDALLRLDGPAMAYCIRRCCELKAEVVAADERETGLRALLNLGHTFGHAIEAEMGYGNWLHGEAVAAGMVMAARTSERLGQFSSAETQRIITLLKRAGLPVNGPREMSAQAYLPHMLRDKKVLAGEMRLILPLAIGKSEVRSGVSHELVLNAIADCQSA.

NAD(+) is bound by residues 71–76 (DGEQYK), 105–109 (GVVGD), 129–130 (TT), Lys142, Lys151, and 169–172 (CLKT). Residues Glu184, His247, and His264 each coordinate Zn(2+).

This sequence belongs to the sugar phosphate cyclases superfamily. Dehydroquinate synthase family. It depends on Co(2+) as a cofactor. Zn(2+) serves as cofactor. Requires NAD(+) as cofactor.

The protein localises to the cytoplasm. The catalysed reaction is 7-phospho-2-dehydro-3-deoxy-D-arabino-heptonate = 3-dehydroquinate + phosphate. It participates in metabolic intermediate biosynthesis; chorismate biosynthesis; chorismate from D-erythrose 4-phosphate and phosphoenolpyruvate: step 2/7. Catalyzes the conversion of 3-deoxy-D-arabino-heptulosonate 7-phosphate (DAHP) to dehydroquinate (DHQ). In Shigella dysenteriae serotype 1 (strain Sd197), this protein is 3-dehydroquinate synthase.